Here is a 338-residue protein sequence, read N- to C-terminus: Ketol-acid reductoisomerase (NADP(+)) (338 aa).

The 181-residue stretch at 1 to 181 folds into the KARI N-terminal Rossmann domain; it reads MKVFYDKDAD…GGGRAGIIET (181 aa). NADP(+) is bound by residues 24-27, R47, and S52; that span reads YGSQ. H107 is a catalytic residue. G133 serves as a coordination point for NADP(+). One can recognise a KARI C-terminal knotted domain in the interval 182 to 327; that stretch reads NFREETETDL…AKLRAMMPWI (146 aa). Residues D190, E194, E226, and E230 each contribute to the Mg(2+) site. S251 contacts substrate.

It belongs to the ketol-acid reductoisomerase family. Requires Mg(2+) as cofactor.

The catalysed reaction is (2R)-2,3-dihydroxy-3-methylbutanoate + NADP(+) = (2S)-2-acetolactate + NADPH + H(+). It catalyses the reaction (2R,3R)-2,3-dihydroxy-3-methylpentanoate + NADP(+) = (S)-2-ethyl-2-hydroxy-3-oxobutanoate + NADPH + H(+). Its pathway is amino-acid biosynthesis; L-isoleucine biosynthesis; L-isoleucine from 2-oxobutanoate: step 2/4. The protein operates within amino-acid biosynthesis; L-valine biosynthesis; L-valine from pyruvate: step 2/4. Involved in the biosynthesis of branched-chain amino acids (BCAA). Catalyzes an alkyl-migration followed by a ketol-acid reduction of (S)-2-acetolactate (S2AL) to yield (R)-2,3-dihydroxy-isovalerate. In the isomerase reaction, S2AL is rearranged via a Mg-dependent methyl migration to produce 3-hydroxy-3-methyl-2-ketobutyrate (HMKB). In the reductase reaction, this 2-ketoacid undergoes a metal-dependent reduction by NADPH to yield (R)-2,3-dihydroxy-isovalerate. The chain is Ketol-acid reductoisomerase (NADP(+)) from Ralstonia pickettii (strain 12J).